We begin with the raw amino-acid sequence, 215 residues long: N-(5'-phosphoribosyl)anthranilate isomerase (215 aa).

It belongs to the TrpF family.

It carries out the reaction N-(5-phospho-beta-D-ribosyl)anthranilate = 1-(2-carboxyphenylamino)-1-deoxy-D-ribulose 5-phosphate. It functions in the pathway amino-acid biosynthesis; L-tryptophan biosynthesis; L-tryptophan from chorismate: step 3/5. The protein is N-(5'-phosphoribosyl)anthranilate isomerase of Chlorobium phaeobacteroides (strain DSM 266 / SMG 266 / 2430).